The primary structure comprises 138 residues: ATP synthase epsilon chain (138 aa).

This sequence belongs to the ATPase epsilon chain family. F-type ATPases have 2 components, CF(1) - the catalytic core - and CF(0) - the membrane proton channel. CF(1) has five subunits: alpha(3), beta(3), gamma(1), delta(1), epsilon(1). CF(0) has three main subunits: a, b and c.

The protein resides in the cellular thylakoid membrane. In terms of biological role, produces ATP from ADP in the presence of a proton gradient across the membrane. The sequence is that of ATP synthase epsilon chain from Cyanothece sp. (strain PCC 7425 / ATCC 29141).